Reading from the N-terminus, the 497-residue chain is Guanosine-5'-triphosphate,3'-diphosphate pyrophosphatase (497 aa).

The protein belongs to the GppA/Ppx family. GppA subfamily.

The catalysed reaction is guanosine 3'-diphosphate 5'-triphosphate + H2O = guanosine 3',5'-bis(diphosphate) + phosphate + H(+). Its pathway is purine metabolism; ppGpp biosynthesis; ppGpp from GTP: step 2/2. Its function is as follows. Catalyzes the conversion of pppGpp to ppGpp. Guanosine pentaphosphate (pppGpp) is a cytoplasmic signaling molecule which together with ppGpp controls the 'stringent response', an adaptive process that allows bacteria to respond to amino acid starvation, resulting in the coordinated regulation of numerous cellular activities. The polypeptide is Guanosine-5'-triphosphate,3'-diphosphate pyrophosphatase (Photobacterium profundum (strain SS9)).